Reading from the N-terminus, the 207-residue chain is Thiamine-phosphate synthase (207 aa).

4-amino-2-methyl-5-(diphosphooxymethyl)pyrimidine contacts are provided by residues 37–41 (QLREK) and Asn-69. Mg(2+) is bound by residues Asp-70 and Asp-89. Ser-108 contacts 4-amino-2-methyl-5-(diphosphooxymethyl)pyrimidine. 134-136 (TGS) lines the 2-[(2R,5Z)-2-carboxy-4-methylthiazol-5(2H)-ylidene]ethyl phosphate pocket. Lys-137 serves as a coordination point for 4-amino-2-methyl-5-(diphosphooxymethyl)pyrimidine. 2-[(2R,5Z)-2-carboxy-4-methylthiazol-5(2H)-ylidene]ethyl phosphate contacts are provided by residues Gly-165 and 185–186 (IS).

It belongs to the thiamine-phosphate synthase family. Mg(2+) is required as a cofactor.

It catalyses the reaction 2-[(2R,5Z)-2-carboxy-4-methylthiazol-5(2H)-ylidene]ethyl phosphate + 4-amino-2-methyl-5-(diphosphooxymethyl)pyrimidine + 2 H(+) = thiamine phosphate + CO2 + diphosphate. It carries out the reaction 2-(2-carboxy-4-methylthiazol-5-yl)ethyl phosphate + 4-amino-2-methyl-5-(diphosphooxymethyl)pyrimidine + 2 H(+) = thiamine phosphate + CO2 + diphosphate. The catalysed reaction is 4-methyl-5-(2-phosphooxyethyl)-thiazole + 4-amino-2-methyl-5-(diphosphooxymethyl)pyrimidine + H(+) = thiamine phosphate + diphosphate. It functions in the pathway cofactor biosynthesis; thiamine diphosphate biosynthesis; thiamine phosphate from 4-amino-2-methyl-5-diphosphomethylpyrimidine and 4-methyl-5-(2-phosphoethyl)-thiazole: step 1/1. In terms of biological role, condenses 4-methyl-5-(beta-hydroxyethyl)thiazole monophosphate (THZ-P) and 2-methyl-4-amino-5-hydroxymethyl pyrimidine pyrophosphate (HMP-PP) to form thiamine monophosphate (TMP). The sequence is that of Thiamine-phosphate synthase from Desulfitobacterium hafniense (strain DSM 10664 / DCB-2).